The sequence spans 677 residues: WD and tetratricopeptide repeats protein 1 (677 aa).

WD repeat units lie at residues 45–84 (GHSGCVNCLEWNEKGDLLASGSDDQHTIVWDPLHHKKLLS), 88–129 (GHTA…TIHM), 132–172 (DHTN…KHSE), 182–222 (GPMV…NHRK), and 265–305 (RLRV…RPYT). Ser-352 carries the post-translational modification Phosphoserine. 2 TPR repeats span residues 361-394 (LERVKQQANEAFACQQWTQAIQLYSQAVQKAPHN) and 396-431 (MLYGNRAAAYMKRKWDGDHYDALRDCLKAISLNPCH). Residues 489–509 (EEKKAAGGGGGPVRLRSTSRK) are disordered. Ser-511 is modified (phosphoserine). WD repeat units lie at residues 535-575 (NTTT…LVRV) and 578-617 (GDESIVNCLQPHPSYCFLATSGIDPVVRLWNPRPESEDLT). The disordered stretch occupies residues 655–677 (SSGGAGASDDEDSAEGQVQCRPS).

The protein operates within protein modification; protein ubiquitination. May function as a substrate receptor for CUL4-DDB1 E3 ubiquitin-protein ligase complex. In Mus musculus (Mouse), this protein is WD and tetratricopeptide repeats protein 1 (Wdtc1).